A 214-amino-acid polypeptide reads, in one-letter code: Leucyl/phenylalanyl-tRNA--protein transferase (214 aa).

It belongs to the L/F-transferase family.

The protein resides in the cytoplasm. It catalyses the reaction N-terminal L-lysyl-[protein] + L-leucyl-tRNA(Leu) = N-terminal L-leucyl-L-lysyl-[protein] + tRNA(Leu) + H(+). It carries out the reaction N-terminal L-arginyl-[protein] + L-leucyl-tRNA(Leu) = N-terminal L-leucyl-L-arginyl-[protein] + tRNA(Leu) + H(+). The enzyme catalyses L-phenylalanyl-tRNA(Phe) + an N-terminal L-alpha-aminoacyl-[protein] = an N-terminal L-phenylalanyl-L-alpha-aminoacyl-[protein] + tRNA(Phe). Its function is as follows. Functions in the N-end rule pathway of protein degradation where it conjugates Leu, Phe and, less efficiently, Met from aminoacyl-tRNAs to the N-termini of proteins containing an N-terminal arginine or lysine. The sequence is that of Leucyl/phenylalanyl-tRNA--protein transferase from Cereibacter sphaeroides (strain ATCC 17029 / ATH 2.4.9) (Rhodobacter sphaeroides).